We begin with the raw amino-acid sequence, 629 residues long: Probable potassium transport system protein Kup 3 (629 aa).

12 consecutive transmembrane segments (helical) span residues 20–40, 54–74, 106–126, 143–163, 171–191, 212–232, 253–273, 291–311, 343–363, 372–392, 400–420, and 425–445; these read LSLSALGIVYGDIGTSPLYTF, VTTIMGSASLIIWTLIIIASV, PFIIAVGLMGAALIYGDGTIT, PSLKYYVLPIAITILITLFAI, IGKAFGPVMAFWFLTIGILGA, FLFSNGATGFFILCGVFLCAT, WFGLAFPSLIFNYLGQAALVL, FLLPLIILSTVATIIASQAII, IYIGVVNWLLMLATLGLIIGF, AYGIAVSATMLCTTVLLFIAL, IITSGLVAGLFMIVDASFFAA, and FINGGYIPITLAIIIYSMMYI.

This sequence belongs to the HAK/KUP transporter (TC 2.A.72) family.

Its subcellular location is the cell inner membrane. The enzyme catalyses K(+)(in) + H(+)(in) = K(+)(out) + H(+)(out). Transport of potassium into the cell. Likely operates as a K(+):H(+) symporter. This chain is Probable potassium transport system protein Kup 3, found in Legionella pneumophila (strain Paris).